A 109-amino-acid chain; its full sequence is Resistin (109 aa).

The N-terminal stretch at 1–18 is a signal peptide; it reads MKALSFLFIPVLGLLVCG. 5 cysteine pairs are disulfide-bonded: C51-C104, C63-C103, C72-C89, C74-C91, and C78-C93.

The protein belongs to the resistin/FIZZ family. In terms of assembly, homodimer; disulfide-linked.

It localises to the secreted. Its function is as follows. Hormone that seems to suppress insulin ability to stimulate glucose uptake into adipose cells. Potentially links obesity to diabetes. The chain is Resistin (RETN) from Bos taurus (Bovine).